Here is a 441-residue protein sequence, read N- to C-terminus: UPF0761 membrane protein Clim_1521 (441 aa).

6 helical membrane passes run 54-74 (IFLSAGSLAFQTLLSIVPFLA), 122-142 (TVPLIGGLLLFIIALSLISTI), 161-181 (AFTLYWTVLTLGPVLIGSSLG), 203-223 (LISFLPFVNSLLSFLLLYMLV), 233-253 (AFSGAVAAALLFELSKKWFVF), and 266-286 (GAISAVPLLFFWIYIGWLVVL).

The protein belongs to the UPF0761 family.

Its subcellular location is the cell inner membrane. The protein is UPF0761 membrane protein Clim_1521 of Chlorobium limicola (strain DSM 245 / NBRC 103803 / 6330).